A 49-amino-acid chain; its full sequence is IgW transmembrane form Tm2T7/Tm7T7/Tm3T3 (49 aa).

Asn3 is a glycosylation site (N-linked (GlcNAc...) asparagine). Residues 25–45 form a helical membrane-spanning segment; it reads VAAFAILFILSFLYSTFVTVV.

In terms of tissue distribution, expressed in the spleen. May also be expressed in other lymphoid tissues.

The protein localises to the membrane. This chain is IgW transmembrane form Tm2T7/Tm7T7/Tm3T3, found in Heterodontus francisci (Horn shark).